The chain runs to 330 residues: MDKTMTLFLLLSTLLLTTSLAKDLCHKDDKTTLLKIKKSLNNPYHLASWDPKTDCCSWYCLECGDATVNHRVTSLIIQDGEISGQIPPEVGDLPYLTSLIFRKLTNLTGHIQPTIAKLKNLTFLRLSWTNLTGPVPEFLSQLKNLEYIDLSFNDLSGSIPSSLSSLRKLEYLELSRNKLTGPIPESFGTFSGKVPSLFLSHNQLSGTIPKSLGNPDFYRIDLSRNKLQGDASILFGAKKTTWIVDISRNMFQFDLSKVKLAKTLNNLDMNHNGITGSIPAEWSKAYFQLLNVSYNRLCGRIPKGEYIQRFDSYSFFHNKCLCGAPLPSCK.

Positions 1–21 are cleaved as a signal peptide; that stretch reads MDKTMTLFLLLSTLLLTTSLA. Cystine bridges form between cysteine 25/cysteine 55 and cysteine 56/cysteine 63. LRR repeat units lie at residues 69–93, 94–117, 118–141, 142–166, 167–192, 194–215, 217–237, 238–260, 261–285, and 287–308; these read NHRV…VGDL, PYLT…TIAK, LKNL…FLSQ, LKNL…LSSL, RKLE…TFSG, VPSL…LGNP, FYRI…LFGA, KKTT…KVKL, AKTL…WSKA, and FQLL…EYIQ. N-linked (GlcNAc...) asparagine glycosylation is found at asparagine 106, asparagine 120, and asparagine 130. Asparagine 291 carries N-linked (GlcNAc...) asparagine glycosylation. 2 cysteine pairs are disulfide-bonded: cysteine 298–cysteine 320 and cysteine 322–cysteine 329.

Belongs to the polygalacturonase-inhibiting protein family.

Its subcellular location is the secreted. The protein resides in the cell wall. It is found in the membrane. Its function is as follows. Inhibitor of fungal polygalacturonase. It is an important factor for plant resistance to phytopathogenic fungi. In Arabidopsis thaliana (Mouse-ear cress), this protein is Polygalacturonase inhibitor 2 (PGIP2).